The following is a 210-amino-acid chain: Large ribosomal subunit protein uL3 (210 aa).

The tract at residues 125 to 151 (RHGQSRGPMSHGSRYHRRPGSMGPVAP) is disordered.

The protein belongs to the universal ribosomal protein uL3 family. As to quaternary structure, part of the 50S ribosomal subunit. Forms a cluster with proteins L14 and L19.

In terms of biological role, one of the primary rRNA binding proteins, it binds directly near the 3'-end of the 23S rRNA, where it nucleates assembly of the 50S subunit. This chain is Large ribosomal subunit protein uL3, found in Bacillus mycoides (strain KBAB4) (Bacillus weihenstephanensis).